Reading from the N-terminus, the 275-residue chain is Urease accessory protein UreD (275 aa).

Belongs to the UreD family. As to quaternary structure, ureD, UreF and UreG form a complex that acts as a GTP-hydrolysis-dependent molecular chaperone, activating the urease apoprotein by helping to assemble the nickel containing metallocenter of UreC. The UreE protein probably delivers the nickel.

It localises to the cytoplasm. In terms of biological role, required for maturation of urease via the functional incorporation of the urease nickel metallocenter. This chain is Urease accessory protein UreD, found in Cereibacter sphaeroides (strain ATCC 17029 / ATH 2.4.9) (Rhodobacter sphaeroides).